Here is a 120-residue protein sequence, read N- to C-terminus: MAKYRAGRINEEVKKEVSNIIHNDIKDPRLSAMVSVTDVNVTKDLKYAKVYVSIFGNEKAKEESLQALKSSVGFIRKEVGRRVKLRNTPEVIIEVDNSIERGMHIDELLHSIKENESNDN.

The protein belongs to the RbfA family. Monomer. Binds 30S ribosomal subunits, but not 50S ribosomal subunits or 70S ribosomes.

It localises to the cytoplasm. Functionally, one of several proteins that assist in the late maturation steps of the functional core of the 30S ribosomal subunit. Associates with free 30S ribosomal subunits (but not with 30S subunits that are part of 70S ribosomes or polysomes). Required for efficient processing of 16S rRNA. May interact with the 5'-terminal helix region of 16S rRNA. In Clostridium botulinum (strain 657 / Type Ba4), this protein is Ribosome-binding factor A.